The primary structure comprises 307 residues: Transmembrane protein 200B (307 aa).

The interval 1 to 38 is disordered; that stretch reads MTAGSPEECGEVRRSPEGRVSRLGRRLGRRRRPRSPPE. Residues 10–20 are compositionally biased toward basic and acidic residues; sequence GEVRRSPEGRV. Positions 22 to 34 are enriched in basic residues; it reads RLGRRLGRRRRPR. The chain crosses the membrane as a helical span at residues 53–73; it reads GAFAALGALVVLVGMGIAVAG. The segment at 81 to 111 is disordered; sequence APGSRAANASSPQMSELRREGRGGGRAHGPH. Asn88 carries an N-linked (GlcNAc...) asparagine glycan. Basic and acidic residues predominate over residues 96–111; it reads ELRREGRGGGRAHGPH. A helical membrane pass occupies residues 116–136; that stretch reads LLGPVIMGVGLFVFICANTLL. Residues 180–211 form a disordered region; it reads AVGCAEPEIWDPSPRRGTSPVPSVRSLRSEPA.

It belongs to the TMEM200 family.

The protein localises to the membrane. The chain is Transmembrane protein 200B (TMEM200B) from Homo sapiens (Human).